Reading from the N-terminus, the 302-residue chain is MHIRILGSAAGGGFPQWNCNCRNCHGLRQGTLRATPRSQSSIALSDDGANWILCNASPDIRAQIEAFPALQPARAVRDTAIRALILLDSQIDHCTGLLGLREGCPHEVWCTEMVHQDLTTGFPLFAMLEHWNGGLHWKPIVLERSFAVDACPALRFTPIPLRSAAPPYSPHRHDPHPGDNLGLLVEDSRTGGTLFYAPGLGRVDAPLRERMRRADCLLVDGTLWRDDEMIHAGCGSKLGSEMGHLPQSGAGGMLEVLDGLDGRKVLIHINNTNPILDEDSPERAQLVARGIEVARDGMDIDL.

Belongs to the PqqB family.

It functions in the pathway cofactor biosynthesis; pyrroloquinoline quinone biosynthesis. Functionally, may be involved in the transport of PQQ or its precursor to the periplasm. The sequence is that of Coenzyme PQQ synthesis protein B from Azotobacter vinelandii (strain DJ / ATCC BAA-1303).